The following is a 254-amino-acid chain: Alcohol dehydrogenase (254 aa).

10-33 (FVAGLGGIGLDTSREIVKSGPKNL) serves as a coordination point for NAD(+). Residue serine 138 participates in substrate binding. Residue tyrosine 151 is the Proton acceptor of the active site.

Belongs to the short-chain dehydrogenases/reductases (SDR) family. Homodimer.

It catalyses the reaction a primary alcohol + NAD(+) = an aldehyde + NADH + H(+). The catalysed reaction is a secondary alcohol + NAD(+) = a ketone + NADH + H(+). This chain is Alcohol dehydrogenase (Adh), found in Drosophila differens (Fruit fly).